Reading from the N-terminus, the 184-residue chain is Tumor necrosis factor alpha-induced protein 8-like protein 2 (184 aa).

Ser-3 carries the phosphoserine modification.

The protein belongs to the TNFAIP8 family. TNFAIP8L2 subfamily. May interact with CASP8; however, such result is unclear since could not reproduce the interaction with CASP8. Interacts with RAC1. Post-translationally, phosphorylated by TAK1/MAP3K7; this phosphorylation triggers association with BTRC and subsequent ubiquitination and degradation. Ubiquitinated in a BTRC-depdent manner; leading to degradation mediated through the proteasome pathway.

It localises to the cytoplasm. It is found in the nucleus. Its subcellular location is the lysosome. Functionally, acts as a negative regulator of innate and adaptive immunity by maintaining immune homeostasis. Plays a regulatory role in the Toll-like signaling pathway by determining the strength of LPS-induced signaling and gene expression. Inhibits TCR-mediated T-cell activation and negatively regulate T-cell function to prevent hyperresponsiveness. Also inhibits autolysosome formation via negatively modulating MTOR activation by interacting with RAC1 and promoting the disassociation of the RAC1-MTOR complex. Plays an essential role in NK-cell biology by acting as a checkpoint and displaying an expression pattern correlating with NK-cell maturation process and by negatively regulating NK-cell maturation and antitumor immunity. Mechanistically, suppresses IL-15-triggered mTOR activity in NK-cells. The chain is Tumor necrosis factor alpha-induced protein 8-like protein 2 (TNFAIP8L2) from Otolemur garnettii (Small-eared galago).